Here is a 59-residue protein sequence, read N- to C-terminus: Ferredoxin (59 aa).

A 4Fe-4S ferredoxin-type domain is found at 2–29; it reads KVSVDKDACIGCGVCASICPDVFEMDDD. [4Fe-4S] cluster contacts are provided by Cys10, Cys13, and Cys16. Cys20 and Cys43 are oxidised to a cystine. Residue Cys51 participates in [4Fe-4S] cluster binding.

Requires [4Fe-4S] cluster as cofactor. [3Fe-4S] cluster is required as a cofactor.

Functionally, ferredoxins are iron-sulfur proteins that transfer electrons in a wide variety of metabolic reactions. This chain is Ferredoxin, found in Thermococcus litoralis.